A 225-amino-acid polypeptide reads, in one-letter code: Immune-associated nucleotide-binding protein 1 (225 aa).

Residues 6 to 214 form the AIG1-type G domain; that stretch reads CPVTNLLLLG…YTENMHRKIK (209 aa). Positions 15 to 22 are G1; it reads GRSENGKS. 15–23 is a binding site for GTP; the sequence is GRSENGKSS. The tract at residues 42 to 46 is G2; that stretch reads DMDQR. Positions 64–67 are G3; sequence DTPG. Residues 134–137 form a G4 region; sequence TGGD. The segment at 173–175 is G5; sequence NNK. GTP is bound at residue Asn-174.

It belongs to the TRAFAC class TrmE-Era-EngA-EngB-Septin-like GTPase superfamily. AIG1/Toc34/Toc159-like paraseptin GTPase family. IAN subfamily. Mostly expressed in pollen.

This Arabidopsis thaliana (Mouse-ear cress) protein is Immune-associated nucleotide-binding protein 1.